The primary structure comprises 247 residues: Triosephosphate isomerase (247 aa).

Residue asparagine 9–lysine 11 participates in substrate binding. The active-site Electrophile is the histidine 94. Glutamate 166 serves as the catalytic Proton acceptor. Residues glycine 172, serine 211, and glycine 232–glycine 233 contribute to the substrate site.

This sequence belongs to the triosephosphate isomerase family. As to quaternary structure, homodimer.

The protein resides in the cytoplasm. The enzyme catalyses D-glyceraldehyde 3-phosphate = dihydroxyacetone phosphate. The protein operates within carbohydrate biosynthesis; gluconeogenesis. It participates in carbohydrate degradation; glycolysis; D-glyceraldehyde 3-phosphate from glycerone phosphate: step 1/1. Involved in the gluconeogenesis. Catalyzes stereospecifically the conversion of dihydroxyacetone phosphate (DHAP) to D-glyceraldehyde-3-phosphate (G3P). In Cupriavidus taiwanensis (strain DSM 17343 / BCRC 17206 / CCUG 44338 / CIP 107171 / LMG 19424 / R1) (Ralstonia taiwanensis (strain LMG 19424)), this protein is Triosephosphate isomerase.